The primary structure comprises 718 residues: Threonine--tRNA ligase, mitochondrial (718 aa).

Ser-52 carries the post-translational modification Phosphoserine. Positions 55–121 (QKEPRTIKIS…ETDSDLRFLT (67 aa)) constitute a TGS domain.

This sequence belongs to the class-II aminoacyl-tRNA synthetase family. Homodimer.

Its subcellular location is the mitochondrion matrix. It carries out the reaction tRNA(Thr) + L-threonine + ATP = L-threonyl-tRNA(Thr) + AMP + diphosphate + H(+). Its function is as follows. Catalyzes the attachment of threonine to tRNA(Thr) in a two-step reaction: threonine is first activated by ATP to form Thr-AMP and then transferred to the acceptor end of tRNA(Thr). Also edits incorrectly charged tRNA(Thr) via its editing domain. The chain is Threonine--tRNA ligase, mitochondrial (TARS2) from Homo sapiens (Human).